The primary structure comprises 244 residues: MSENSANELKYSRVLLKVSGEALMGDKGFGWDIETIDNLSHDLKEVHDLGVQLCLVVGGGNIFRGASASAPFGFERASNDYIGMLATMMNALSLQNSLEKINVQSRVLSAVSITAVCETYIRRRAIRHLEKGRIVICAAGVGNPFFTTDTAAALRGIEMGCNVIFKGTQVDGVYSADPKKVADAVRYDKISYRELLSLDLKIMDVAAVSLARDHSIPIIVFNLGKRGALADIICGGGLYTTIYN.

Residue 17–20 (KVSG) coordinates ATP. Positions 25–30 (GDKGFG) are involved in allosteric activation by GTP. Gly-59 lines the UMP pocket. 2 residues coordinate ATP: Gly-60 and Arg-64. UMP-binding positions include Asp-80 and 141–148 (VGNPFFTT). Residues Thr-168, Gln-169, Tyr-174, and Asp-177 each coordinate ATP.

Belongs to the UMP kinase family. As to quaternary structure, homohexamer.

It is found in the cytoplasm. The catalysed reaction is UMP + ATP = UDP + ADP. It functions in the pathway pyrimidine metabolism; CTP biosynthesis via de novo pathway; UDP from UMP (UMPK route): step 1/1. Allosterically activated by GTP. Inhibited by UTP. Functionally, catalyzes the reversible phosphorylation of UMP to UDP. This is Uridylate kinase from Ehrlichia ruminantium (strain Welgevonden).